Consider the following 232-residue polypeptide: Chalcone synthase (232 aa).

Residue C7 is part of the active site.

The protein belongs to the thiolase-like superfamily. Chalcone/stilbene synthases family.

It carries out the reaction (E)-4-coumaroyl-CoA + 3 malonyl-CoA + 3 H(+) = 2',4,4',6'-tetrahydroxychalcone + 3 CO2 + 4 CoA. The protein operates within secondary metabolite biosynthesis; flavonoid biosynthesis. Functionally, the primary product of this enzyme is 4,2',4',6'-tetrahydroxychalcone (also termed naringenin-chalcone or chalcone) which can under specific conditions spontaneously isomerize into naringenin. This chain is Chalcone synthase (CHS), found in Malus domestica (Apple).